The chain runs to 364 residues: 4-hydroxy-3-methylbut-2-en-1-yl diphosphate synthase (flavodoxin) (364 aa).

4 residues coordinate [4Fe-4S] cluster: Cys268, Cys271, Cys303, and Glu310.

The protein belongs to the IspG family. [4Fe-4S] cluster serves as cofactor.

The enzyme catalyses (2E)-4-hydroxy-3-methylbut-2-enyl diphosphate + oxidized [flavodoxin] + H2O + 2 H(+) = 2-C-methyl-D-erythritol 2,4-cyclic diphosphate + reduced [flavodoxin]. It participates in isoprenoid biosynthesis; isopentenyl diphosphate biosynthesis via DXP pathway; isopentenyl diphosphate from 1-deoxy-D-xylulose 5-phosphate: step 5/6. Converts 2C-methyl-D-erythritol 2,4-cyclodiphosphate (ME-2,4cPP) into 1-hydroxy-2-methyl-2-(E)-butenyl 4-diphosphate. In Desulfotalea psychrophila (strain LSv54 / DSM 12343), this protein is 4-hydroxy-3-methylbut-2-en-1-yl diphosphate synthase (flavodoxin).